A 482-amino-acid chain; its full sequence is UDP-N-acetylmuramate--L-alanine ligase (482 aa).

122–128 (GTHGKTT) lines the ATP pocket.

The protein belongs to the MurCDEF family.

The protein localises to the cytoplasm. It carries out the reaction UDP-N-acetyl-alpha-D-muramate + L-alanine + ATP = UDP-N-acetyl-alpha-D-muramoyl-L-alanine + ADP + phosphate + H(+). It participates in cell wall biogenesis; peptidoglycan biosynthesis. Functionally, cell wall formation. This is UDP-N-acetylmuramate--L-alanine ligase from Mycolicibacterium smegmatis (strain ATCC 700084 / mc(2)155) (Mycobacterium smegmatis).